The sequence spans 146 residues: UPF0178 protein Helmi_09130 (146 aa).

This sequence belongs to the UPF0178 family.

The protein is UPF0178 protein Helmi_09130 of Heliobacterium modesticaldum (strain ATCC 51547 / Ice1).